Reading from the N-terminus, the 60-residue chain is DNA gyrase inhibitor YacG (60 aa).

Zn(2+) contacts are provided by C3, C6, C18, and C22. A disordered region spans residues 38 to 60 (PASSEDEEEPLDQEAETPVAPRH). Acidic residues predominate over residues 41 to 52 (SEDEEEPLDQEA).

The protein belongs to the DNA gyrase inhibitor YacG family. In terms of assembly, interacts with GyrB. It depends on Zn(2+) as a cofactor.

Its function is as follows. Inhibits all the catalytic activities of DNA gyrase by preventing its interaction with DNA. Acts by binding directly to the C-terminal domain of GyrB, which probably disrupts DNA binding by the gyrase. This chain is DNA gyrase inhibitor YacG, found in Ruegeria pomeroyi (strain ATCC 700808 / DSM 15171 / DSS-3) (Silicibacter pomeroyi).